A 426-amino-acid chain; its full sequence is uncharacterized protein (426 aa).

The segment at 23–42 (ENPRPTNNPSTSHPSDSYST) is disordered. A compositionally biased stretch (polar residues) spans 26–42 (RPTNNPSTSHPSDSYST).

Belongs to the serpin family.

This is an uncharacterized protein from Thermococcus kodakarensis (strain ATCC BAA-918 / JCM 12380 / KOD1) (Pyrococcus kodakaraensis (strain KOD1)).